The sequence spans 272 residues: Ethanolamine ammonia-lyase small subunit (272 aa).

Residues V161, E182, and C211 each contribute to the adenosylcob(III)alamin site.

The protein belongs to the EutC family. The basic unit is a heterodimer which dimerizes to form tetramers. The heterotetramers trimerize; 6 large subunits form a core ring with 6 small subunits projecting outwards. Requires adenosylcob(III)alamin as cofactor.

Its subcellular location is the bacterial microcompartment. It catalyses the reaction ethanolamine = acetaldehyde + NH4(+). The protein operates within amine and polyamine degradation; ethanolamine degradation. Functionally, catalyzes the deamination of various vicinal amino-alcohols to oxo compounds. Allows this organism to utilize ethanolamine as the sole source of nitrogen and carbon in the presence of external vitamin B12. In Pseudomonas putida (strain GB-1), this protein is Ethanolamine ammonia-lyase small subunit.